A 41-amino-acid chain; its full sequence is Large ribosomal subunit protein bL36 (41 aa).

This sequence belongs to the bacterial ribosomal protein bL36 family.

The chain is Large ribosomal subunit protein bL36 from Hydrogenovibrio crunogenus (strain DSM 25203 / XCL-2) (Thiomicrospira crunogena).